A 279-amino-acid chain; its full sequence is Formamidopyrimidine-DNA glycosylase (279 aa).

The Schiff-base intermediate with DNA role is filled by proline 2. The active-site Proton donor is the glutamate 3. The active-site Proton donor; for beta-elimination activity is the lysine 58. DNA-binding residues include histidine 92, arginine 111, and arginine 153. An FPG-type zinc finger spans residues 238 to 272; sequence TVYGKEGQSCLSCSSTIIKTKHSGRSTFYCKTCQY. Arginine 262 (proton donor; for delta-elimination activity) is an active-site residue.

It belongs to the FPG family. Monomer. It depends on Zn(2+) as a cofactor.

The catalysed reaction is Hydrolysis of DNA containing ring-opened 7-methylguanine residues, releasing 2,6-diamino-4-hydroxy-5-(N-methyl)formamidopyrimidine.. It catalyses the reaction 2'-deoxyribonucleotide-(2'-deoxyribose 5'-phosphate)-2'-deoxyribonucleotide-DNA = a 3'-end 2'-deoxyribonucleotide-(2,3-dehydro-2,3-deoxyribose 5'-phosphate)-DNA + a 5'-end 5'-phospho-2'-deoxyribonucleoside-DNA + H(+). In terms of biological role, involved in base excision repair of DNA damaged by oxidation or by mutagenic agents. Acts as a DNA glycosylase that recognizes and removes damaged bases. Has a preference for oxidized purines, such as 7,8-dihydro-8-oxoguanine (8-oxoG). Has AP (apurinic/apyrimidinic) lyase activity and introduces nicks in the DNA strand. Cleaves the DNA backbone by beta-delta elimination to generate a single-strand break at the site of the removed base with both 3'- and 5'-phosphates. This is Formamidopyrimidine-DNA glycosylase from Rickettsia massiliae (strain Mtu5).